Consider the following 148-residue polypeptide: SsrA-binding protein (148 aa).

The disordered stretch occupies residues 123 to 148; sequence KLHDKRETEKKRDWEREKARIMRSAT. Residues 126–142 show a composition bias toward basic and acidic residues; that stretch reads DKRETEKKRDWEREKAR.

The protein belongs to the SmpB family.

It is found in the cytoplasm. Required for rescue of stalled ribosomes mediated by trans-translation. Binds to transfer-messenger RNA (tmRNA), required for stable association of tmRNA with ribosomes. tmRNA and SmpB together mimic tRNA shape, replacing the anticodon stem-loop with SmpB. tmRNA is encoded by the ssrA gene; the 2 termini fold to resemble tRNA(Ala) and it encodes a 'tag peptide', a short internal open reading frame. During trans-translation Ala-aminoacylated tmRNA acts like a tRNA, entering the A-site of stalled ribosomes, displacing the stalled mRNA. The ribosome then switches to translate the ORF on the tmRNA; the nascent peptide is terminated with the 'tag peptide' encoded by the tmRNA and targeted for degradation. The ribosome is freed to recommence translation, which seems to be the essential function of trans-translation. In Burkholderia thailandensis (strain ATCC 700388 / DSM 13276 / CCUG 48851 / CIP 106301 / E264), this protein is SsrA-binding protein.